The following is a 164-amino-acid chain: Large ribosomal subunit protein bL9 (164 aa).

It belongs to the bacterial ribosomal protein bL9 family.

Binds to the 23S rRNA. The protein is Large ribosomal subunit protein bL9 of Borrelia hermsii (strain HS1 / DAH).